We begin with the raw amino-acid sequence, 898 residues long: Sodium/hydrogen exchanger 5 (898 aa).

The Cytoplasmic segment spans residues 1–48; it reads MLSAALLLLPGLPLAGAGATEEPTQESGPLGEPPPGLALFRWQWHEVE. A helical membrane pass occupies residues 49 to 69; the sequence is APYLVALWILVASLAKIVFHL. Topologically, residues 70 to 76 are extracellular; that stretch reads SRKVTSL. The helical transmembrane segment at 77-97 threads the bilayer; the sequence is VPESCLLILLGLVLGGIVLAV. The Cytoplasmic portion of the chain corresponds to 98–106; that stretch reads AKKAEYQLE. Residues 107 to 127 traverse the membrane as a helical segment; that stretch reads PGTFFLFLLPPIVLDSGYFMP. At 128–137 the chain is on the extracellular side; that stretch reads SRLFFDNLGA. Residues 138-158 traverse the membrane as a helical segment; the sequence is ILTYAVVGTLWNAFTTGVALW. Residues 159–176 lie on the Cytoplasmic side of the membrane; that stretch reads GLQQAGLVAPRVQAGLLD. Residues 177–197 traverse the membrane as a helical segment; sequence FLLFGSLISAVDPVAVLAVFE. Residues 198–203 are Extracellular-facing; sequence EVHVNQ. The chain crosses the membrane as a helical span at residues 204-224; it reads TLFIIIFGESLLNDAVTVVLY. The Cytoplasmic portion of the chain corresponds to 225 to 249; sequence KVCNSFVEMGSANVQATDYLKGVAS. A helical membrane pass occupies residues 250 to 270; sequence LFVVSLGGAAVGLVFAFLLAL. Residues 271–279 lie on the Extracellular side of the membrane; it reads TTRFTKRVR. A helical transmembrane segment spans residues 280-300; the sequence is IIEPLLVFLLAYAAYLTAEMA. Residues 301-334 are Cytoplasmic-facing; sequence SLSAILAVTMCGLGCKKYVEANISHKSRTAVKYT. The chain crosses the membrane as a helical span at residues 335 to 355; sequence MKTLASCAETVIFMLLGISAV. Topologically, residues 356-363 are extracellular; that stretch reads DSSKWAWD. Residues 364 to 384 traverse the membrane as a helical segment; that stretch reads SGLVLGTLFFILFFRALGVVL. Over 385-401 the chain is Cytoplasmic; it reads QTWALNQFRLVPLDKID. Residues 402–422 form a helical membrane-spanning segment; sequence QVVMSYGGLRGAVAFALVILL. At 423 to 431 the chain is on the extracellular side; sequence DRTKVPAKD. The helical transmembrane segment at 432–452 threads the bilayer; the sequence is YFVATTIVVVFFTVIVQGLTI. The Cytoplasmic portion of the chain corresponds to 453–898; sequence KPLVKWLRVK…CIQFNRGGRL (446 aa). 2 disordered regions span residues 660 to 693 and 826 to 866; these read FTKS…RDLG and EEPQ…PQQE. Positions 663-675 are enriched in basic residues; the sequence is SKPRPRKTSHKKK. The segment covering 857–866 has biased composition (polar residues); the sequence is ESSADIPQQE.

It belongs to the monovalent cation:proton antiporter 1 (CPA1) transporter (TC 2.A.36) family. Interacts with CHP1 and CHP2. Interacts with ARRB2; facilitates the endocytosis of SLC9A5 from the plasma membrane. Interacts with RACK1; this interaction positively regulates SLC9A5 activity and promote SLC9A5 localization to focal adhesions. Interacts with SCAMP2; this interaction regulates SLC9A5 cell-surface targeting and SLC9A5 activity. Phosphorylated by PRKAA2; promotes its accumulation at the cell surface. Phosphorylated by CSNK2A1 in a manner favoring its beta-arrestin binding and endocytosis. Highest expression level is detected in brain. Expressed in hippocampal neurons (at protein level).

The protein localises to the cell membrane. It is found in the recycling endosome membrane. The protein resides in the cell projection. It localises to the dendritic spine membrane. Its subcellular location is the synaptic cell membrane. The protein localises to the cell junction. It is found in the focal adhesion. The catalysed reaction is Na(+)(in) + H(+)(out) = Na(+)(out) + H(+)(in). Functionally, plasma membrane Na(+)/H(+) antiporter. Mediates the electroneutral exchange of intracellular H(+) ions for extracellular Na(+) in 1:1 stoichiometry. Responsible for regulating intracellular pH homeostasis, in particular in neural tissues. Acts as a negative regulator of dendritic spine growth. Plays a role in postsynaptic remodeling and signaling. Can also contribute to organellar pH regulation, with consequences for receptor tyrosine kinase trafficking. The chain is Sodium/hydrogen exchanger 5 (Slc9a5) from Mus musculus (Mouse).